Here is a 222-residue protein sequence, read N- to C-terminus: Myosin regulatory light chain 2 (222 aa).

The segment at 1 to 65 (MADEKKKVKK…RGSRKSKRAG (65 aa)) is disordered. An N-acetylalanine modification is found at alanine 2. Positions 19-53 (TSETASEAASEAATPAPAATPAPAASATGSKRASG) are enriched in low complexity. Phosphoserine is present on residues serine 66 and serine 67. 3 EF-hand domains span residues 75 to 110 (KQIA…VGKI), 147 to 180 (DEDE…FGDK), and 181 to 216 (FTMK…KGEE). Ca(2+)-binding residues include aspartate 88, aspartate 90, aspartate 92, and aspartate 99.

As to quaternary structure, myosin is a hexamer of 2 heavy chains and 4 light chains.

In Drosophila melanogaster (Fruit fly), this protein is Myosin regulatory light chain 2 (Mlc2).